The chain runs to 113 residues: Crustacean hyperglycemic hormones B (113 aa).

Residues 1-26 (MVAFRMMSMALLVVVASSWWASPVEA) form the signal peptide. Cystine bridges form between Cys46/Cys82, Cys62/Cys78, and Cys65/Cys91. Position 111 is a valine amide (Val111).

Belongs to the arthropod CHH/MIH/GIH/VIH hormone family. Expressed at a constant level in the eyestalks of juveniles and mature females. A low level expression is seen in the central nervous system.

The protein resides in the secreted. Functionally, hormone found in the sinus gland of isopods and decapods which controls the blood sugar level. Has a secretagogue action over the amylase released from the midgut gland. May act as a stress hormone and may be involved in the control of molting and reproduction. The polypeptide is Crustacean hyperglycemic hormones B (Metapenaeus ensis (Greasyback shrimp)).